A 342-amino-acid chain; its full sequence is Flap endonuclease 1 (342 aa).

Residues 1-99 form an N-domain region; sequence MGVKIGELIE…RAIEERVRAR (99 aa). 7 residues coordinate Mg(2+): D28, D81, E153, E155, D174, D176, and D237. Positions 117–259 are I-domain; the sequence is EARKYAQAAL…RALELVKKYK (143 aa).

Belongs to the XPG/RAD2 endonuclease family. FEN1 subfamily. In terms of assembly, interacts with PCNA. PCNA stimulates the nuclease activity without altering cleavage specificity. Mg(2+) serves as cofactor.

Its function is as follows. Structure-specific nuclease with 5'-flap endonuclease and 5'-3' exonuclease activities involved in DNA replication and repair. During DNA replication, cleaves the 5'-overhanging flap structure that is generated by displacement synthesis when DNA polymerase encounters the 5'-end of a downstream Okazaki fragment. Binds the unpaired 3'-DNA end and kinks the DNA to facilitate 5' cleavage specificity. Cleaves one nucleotide into the double-stranded DNA from the junction in flap DNA, leaving a nick for ligation. Also involved in the base excision repair (BER) pathway. Acts as a genome stabilization factor that prevents flaps from equilibrating into structures that lead to duplications and deletions. Also possesses 5'-3' exonuclease activity on nicked or gapped double-stranded DNA. The polypeptide is Flap endonuclease 1 (Korarchaeum cryptofilum (strain OPF8)).